The chain runs to 137 residues: Large ribosomal subunit protein uL16 (137 aa).

Belongs to the universal ribosomal protein uL16 family. As to quaternary structure, part of the 50S ribosomal subunit.

Binds 23S rRNA and is also seen to make contacts with the A and possibly P site tRNAs. This is Large ribosomal subunit protein uL16 from Maricaulis maris (strain MCS10) (Caulobacter maris).